Reading from the N-terminus, the 184-residue chain is Large ribosomal subunit protein uL6 (184 aa).

This sequence belongs to the universal ribosomal protein uL6 family. Part of the 50S ribosomal subunit.

Functionally, this protein binds to the 23S rRNA, and is important in its secondary structure. It is located near the subunit interface in the base of the L7/L12 stalk, and near the tRNA binding site of the peptidyltransferase center. This is Large ribosomal subunit protein uL6 from Thermotoga maritima (strain ATCC 43589 / DSM 3109 / JCM 10099 / NBRC 100826 / MSB8).